The sequence spans 132 residues: Probable histone H2A.2 (132 aa).

This sequence belongs to the histone H2A family. As to quaternary structure, the nucleosome is a histone octamer containing two molecules each of H2A, H2B, H3 and H4 assembled in one H3-H4 heterotetramer and two H2A-H2B heterodimers. The octamer wraps approximately 147 bp of DNA. In terms of processing, not ubiquitinated. In terms of tissue distribution, expressed mainly in non-dividing tissues of the plant. Also found in meristems and dividing cells.

It localises to the nucleus. Its subcellular location is the chromosome. In terms of biological role, core component of nucleosome. Nucleosomes wrap and compact DNA into chromatin, limiting DNA accessibility to the cellular machineries which require DNA as a template. Histones thereby play a central role in transcription regulation, DNA repair, DNA replication and chromosomal stability. DNA accessibility is regulated via a complex set of post-translational modifications of histones, also called histone code, and nucleosome remodeling. This Arabidopsis thaliana (Mouse-ear cress) protein is Probable histone H2A.2.